The following is a 1070-amino-acid chain: DNA-directed RNA polymerase subunit beta (1070 aa).

This sequence belongs to the RNA polymerase beta chain family. In plastids the minimal PEP RNA polymerase catalytic core is composed of four subunits: alpha, beta, beta', and beta''. When a (nuclear-encoded) sigma factor is associated with the core the holoenzyme is formed, which can initiate transcription.

The protein resides in the plastid. Its subcellular location is the chloroplast. The catalysed reaction is RNA(n) + a ribonucleoside 5'-triphosphate = RNA(n+1) + diphosphate. DNA-dependent RNA polymerase catalyzes the transcription of DNA into RNA using the four ribonucleoside triphosphates as substrates. The sequence is that of DNA-directed RNA polymerase subunit beta from Liriodendron tulipifera (Tuliptree).